A 321-amino-acid polypeptide reads, in one-letter code: Glucan 1,3-beta-glucosidase (321 aa).

A signal peptide spans 1 to 21 (MQFLSSFVFAALALLPLSAMA). Residues asparagine 39 and asparagine 99 are each glycosylated (N-linked (GlcNAc...) asparagine). The Proton donor role is filled by glutamate 141. Asparagine 210, asparagine 213, and asparagine 237 each carry an N-linked (GlcNAc...) asparagine glycan. Catalysis depends on glutamate 244, which acts as the Nucleophile. 2 N-linked (GlcNAc...) asparagine glycosylation sites follow: asparagine 309 and asparagine 317.

This sequence belongs to the glycosyl hydrolase 17 family.

The protein localises to the secreted. Its subcellular location is the cell wall. The catalysed reaction is Successive hydrolysis of beta-D-glucose units from the non-reducing ends of (1-&gt;3)-beta-D-glucans, releasing alpha-glucose.. Glucanases possibly play a role in cell expansion during growth, in cell-cell fusion during mating, and in spore release during sporulation. This enzyme may be involved in beta-glucan degradation and also function biosynthetically as a transglycosylase. The polypeptide is Glucan 1,3-beta-glucosidase (bgl2) (Schizosaccharomyces pombe (strain 972 / ATCC 24843) (Fission yeast)).